The following is a 435-amino-acid chain: Methanethiol oxidase (435 aa).

Residues 1–24 (MKKHLLAGACALAMGFAVIPGTFA) form the signal peptide.

It belongs to the selenium-binding protein family. Homotetramer. The cofactor is Cu cation.

It localises to the periplasm. The enzyme catalyses methanethiol + O2 + H2O = hydrogen sulfide + formaldehyde + H2O2 + H(+). It participates in organosulfur degradation. Inhibited by EDTA but not by EGTA. Functionally, catalyzes the oxidation of methanethiol. Can also degrade ethanethiol, but not methanol, methylamine or dimethylsulfide. The chain is Methanethiol oxidase from Hyphomicrobium sp.